We begin with the raw amino-acid sequence, 137 residues long: Nucleoside diphosphate kinase (137 aa).

The ATP site is built by lysine 9, phenylalanine 57, arginine 85, threonine 91, arginine 102, and asparagine 112. Residue histidine 115 is the Pros-phosphohistidine intermediate of the active site.

The protein belongs to the NDK family. In terms of assembly, homotetramer. Mg(2+) is required as a cofactor.

It is found in the cytoplasm. It carries out the reaction a 2'-deoxyribonucleoside 5'-diphosphate + ATP = a 2'-deoxyribonucleoside 5'-triphosphate + ADP. It catalyses the reaction a ribonucleoside 5'-diphosphate + ATP = a ribonucleoside 5'-triphosphate + ADP. Functionally, major role in the synthesis of nucleoside triphosphates other than ATP. The ATP gamma phosphate is transferred to the NDP beta phosphate via a ping-pong mechanism, using a phosphorylated active-site intermediate. This is Nucleoside diphosphate kinase from Geotalea daltonii (strain DSM 22248 / JCM 15807 / FRC-32) (Geobacter daltonii).